Reading from the N-terminus, the 410-residue chain is Phosphoserine phosphatase (410 aa).

Residues 13 to 91 (LVKIFGKDRP…QAEIISGIGD (79 aa)) form the ACT domain. D187 functions as the Nucleophile in the catalytic mechanism. Mg(2+)-binding residues include D187 and D189. Catalysis depends on D189, which acts as the Proton donor. Residues E196, R232, 275 to 276 (SG), and K320 contribute to the substrate site. D343 contributes to the Mg(2+) binding site. Residue N346 participates in substrate binding.

Belongs to the HAD-like hydrolase superfamily. SerB family. Mg(2+) serves as cofactor.

The enzyme catalyses O-phospho-L-serine + H2O = L-serine + phosphate. It carries out the reaction O-phospho-D-serine + H2O = D-serine + phosphate. The protein operates within amino-acid biosynthesis; L-serine biosynthesis; L-serine from 3-phospho-D-glycerate: step 3/3. Its function is as follows. Catalyzes the dephosphorylation of phosphoserine (P-Ser) in vitro. Also catalyzes the dephosphorylation of phosphothreonine (P-Thr) in vitro. The chain is Phosphoserine phosphatase from Streptomyces coelicolor (strain ATCC BAA-471 / A3(2) / M145).